A 322-amino-acid chain; its full sequence is Ribonuclease Z (322 aa).

Zn(2+) is bound by residues histidine 62, histidine 64, aspartate 66, histidine 67, histidine 143, aspartate 215, and histidine 273. The active-site Proton acceptor is aspartate 66. Residues 300–314 (ELRRYELDPREKEPD) show a composition bias toward basic and acidic residues. Residues 300–322 (ELRRYELDPREKEPDPVGPADES) are disordered.

Belongs to the RNase Z family. Homodimer. Zn(2+) serves as cofactor.

The catalysed reaction is Endonucleolytic cleavage of RNA, removing extra 3' nucleotides from tRNA precursor, generating 3' termini of tRNAs. A 3'-hydroxy group is left at the tRNA terminus and a 5'-phosphoryl group is left at the trailer molecule.. Its function is as follows. Zinc phosphodiesterase, which displays some tRNA 3'-processing endonuclease activity. Probably involved in tRNA maturation, by removing a 3'-trailer from precursor tRNA. The protein is Ribonuclease Z of Salinibacter ruber (strain DSM 13855 / M31).